The following is a 56-amino-acid chain: Small ribosomal subunit protein uS14 (56 aa).

Cys-21, Cys-24, Cys-39, and Cys-42 together coordinate Zn(2+).

It belongs to the universal ribosomal protein uS14 family. As to quaternary structure, component of the small ribosomal subunit (SSU). Mature N.crassa ribosomes consist of a small (40S) and a large (60S) subunit. The 40S small subunit contains 1 molecule of ribosomal RNA (18S rRNA) and at least 32 different proteins. The large 60S subunit contains 3 rRNA molecules (26S, 5.8S and 5S rRNA) and at least 42 different proteins. Requires Zn(2+) as cofactor.

The protein localises to the cytoplasm. In terms of biological role, component of the ribosome, a large ribonucleoprotein complex responsible for the synthesis of proteins in the cell. The small ribosomal subunit (SSU) binds messenger RNAs (mRNAs) and translates the encoded message by selecting cognate aminoacyl-transfer RNA (tRNA) molecules. The large subunit (LSU) contains the ribosomal catalytic site termed the peptidyl transferase center (PTC), which catalyzes the formation of peptide bonds, thereby polymerizing the amino acids delivered by tRNAs into a polypeptide chain. The nascent polypeptides leave the ribosome through a tunnel in the LSU and interact with protein factors that function in enzymatic processing, targeting, and the membrane insertion of nascent chains at the exit of the ribosomal tunnel. This Neurospora crassa (strain ATCC 24698 / 74-OR23-1A / CBS 708.71 / DSM 1257 / FGSC 987) protein is Small ribosomal subunit protein uS14 (rps-29).